Reading from the N-terminus, the 218-residue chain is ATP-dependent dethiobiotin synthetase BioD (218 aa).

ATP is bound at residue 10–15 (NAGKTT). Thr14 serves as a coordination point for Mg(2+). Lys35 is an active-site residue. Residue Thr39 coordinates substrate. Glu116 provides a ligand contact to Mg(2+). ATP is bound by residues 116 to 119 (EGAG) and 176 to 177 (LR).

This sequence belongs to the dethiobiotin synthetase family. Homodimer. It depends on Mg(2+) as a cofactor.

The protein resides in the cytoplasm. It catalyses the reaction (7R,8S)-7,8-diammoniononanoate + CO2 + ATP = (4R,5S)-dethiobiotin + ADP + phosphate + 3 H(+). Its pathway is cofactor biosynthesis; biotin biosynthesis; biotin from 7,8-diaminononanoate: step 1/2. Its function is as follows. Catalyzes a mechanistically unusual reaction, the ATP-dependent insertion of CO2 between the N7 and N8 nitrogen atoms of 7,8-diaminopelargonic acid (DAPA, also called 7,8-diammoniononanoate) to form a ureido ring. The sequence is that of ATP-dependent dethiobiotin synthetase BioD from Helicobacter pylori (strain J99 / ATCC 700824) (Campylobacter pylori J99).